A 228-amino-acid polypeptide reads, in one-letter code: Hematopoietically-expressed homeobox protein hhex (228 aa).

Positions 117-176 (RKGGQVRFSNDQTIELEKKFETQKYLSPPERKRLAKMLQLSERQVKTWFQNRRAKWRRLK) form a DNA-binding region, homeobox. The tract at residues 175 to 228 (LKQENPPSTGKREAEDSDTRRLSDAAARARELESGASTDSEELLDIEDEHQFTL) is disordered. Positions 184-207 (GKREAEDSDTRRLSDAAARARELE) are enriched in basic and acidic residues. Over residues 213-222 (DSEELLDIED) the composition is skewed to acidic residues.

As to expression, expressed in embryonic endothelial and blood lineages. From late-blastula stage, expression is restricted to the dorsal marginal region of the extraembryonic yolk syncytial layer (YSL). By the onset of gastrulation, expressed in the entire dorsal half of the YSL. Post-gastrulation, expression appears in both anterior and posterior lateral plate mesoderm by the 3-somite stage. Posteriorly, expression is in the intermediate cell mass (ICM), which contains both endothelial and blood precursors. Subsequently expressed in the developing endothelial cells including the endocardium until the onset of circulation (24 hpf) and disappears completely by 30 hpf, at which point expression is seen in the thyroid and liver primordia. Also expressed in the developing biliary tree and pancreas.

The protein localises to the nucleus. In terms of biological role, recognizes the DNA sequence 5'-ATTAA-3'. Transcriptional repressor. Regulates the differentiation of both endothelial and blood cells. Plays a role in embryonic dorsoventral patterning by regulating bmp expression. May establish anterior identity. Functions in the embryo to regulate liver development. Functions extraembryonically to generate organ chirality. This Danio rerio (Zebrafish) protein is Hematopoietically-expressed homeobox protein hhex.